Reading from the N-terminus, the 300-residue chain is Quinolinate synthase (300 aa).

Residues histidine 23 and serine 40 each contribute to the iminosuccinate site. A [4Fe-4S] cluster-binding site is contributed by cysteine 85. Residues 111–113 (YIN) and serine 128 each bind iminosuccinate. Cysteine 171 contacts [4Fe-4S] cluster. Iminosuccinate-binding positions include 198–200 (HPE) and threonine 215. Cysteine 258 is a [4Fe-4S] cluster binding site.

This sequence belongs to the quinolinate synthase family. Type 2 subfamily. It depends on [4Fe-4S] cluster as a cofactor.

It localises to the cytoplasm. The enzyme catalyses iminosuccinate + dihydroxyacetone phosphate = quinolinate + phosphate + 2 H2O + H(+). Its pathway is cofactor biosynthesis; NAD(+) biosynthesis; quinolinate from iminoaspartate: step 1/1. Catalyzes the condensation of iminoaspartate with dihydroxyacetone phosphate to form quinolinate. The sequence is that of Quinolinate synthase from Clostridium novyi (strain NT).